Consider the following 538-residue polypeptide: Telomerase Cajal body protein 1 (538 aa).

The tract at residues 1–53 (MKTSEERLVVPDSLSSDQAPAPVPQGSPVDENTDSEPVPQPCGGDDRSQVAAD) is disordered. Phosphoserine occurs at positions 27 and 87. A disordered region spans residues 92–128 (EQELSENVSLPVEDTNQPELASGEDVEGVSEEPGPVD). Acidic residues predominate over residues 113-128 (SGEDVEGVSEEPGPVD). 6 WD repeats span residues 154-194 (AHSE…YSAT), 210-255 (EGDT…LRAS), 260-301 (NHLD…RDCE), 311-352 (GQSG…ALLG), 353-393 (GHQG…HLLW), and 399-438 (VTTNQRIYFDLDPSGQFLVSGNTNGMVSVWDISGAFGDSS). Disordered regions lie at residues 471–491 (QRMFPEPTNSGDEGEPEGDLP) and 509–538 (CGGGPDPSSPNDPQDEKGQGRAEGCGDGLI). The residue at position 478 (T478) is a Phosphothreonine. At S480 the chain carries Phosphoserine. Residues 529–538 (RAEGCGDGLI) show a composition bias toward gly residues.

The protein belongs to the TCAB1 family. Component of the telomerase holoenzyme complex composed of one molecule of TERT, one molecule of WRAP53/TCAB1, two molecules of H/ACA ribonucleoprotein complex subunits DKC1, NOP10, NHP2 and GAR1, and a telomerase RNA template component (TERC). The telomerase holoenzyme complex is associated with TEP1, SMG6/EST1A and POT1. Interacts with the chaperonin-containing T-complex (TRiC) complex; which mediates the folding of WRAP53/TCAB1. Interacts with COIL. Interacts with SMN1. Interacts with RNF8. Interacts with histone H2AX. Preferentially expressed in testis.

Its subcellular location is the nucleus. The protein localises to the cajal body. The protein resides in the chromosome. It localises to the telomere. RNA chaperone that plays a key role in telomere maintenance and RNA localization to Cajal bodies. Specifically recognizes and binds the Cajal body box (CAB box) present in both small Cajal body RNAs (scaRNAs) and telomerase RNA template component (TERC). Essential component of the telomerase holoenzyme complex, a ribonucleoprotein complex essential for the replication of chromosome termini that elongates telomeres in most eukaryotes. In the telomerase holoenzyme complex, required to stimulate the catalytic activity of the complex. Acts by specifically binding the CAB box of the TERC RNA and controlling the folding of the CR4/CR5 region of the TERC RNA, a critical step for telomerase activity. In addition, also controls telomerase holoenzyme complex localization to Cajal body. During S phase, required for delivery of TERC to telomeres during S phase and for telomerase activity. In addition to its role in telomere maintenance, also required for Cajal body formation, probably by mediating localization of scaRNAs to Cajal bodies. Also plays a role in DNA repair: relocalizes to sites of DNA double-strand breaks in response to DNA damage and promotes the repair of DNA double-strand breaks. Acts by recruiting the ubiquitin ligase RNF8 to DNA breaks and promote both homologous recombination (HR) and non-homologous end joining (NHEJ). The chain is Telomerase Cajal body protein 1 from Mesocricetus auratus (Golden hamster).